We begin with the raw amino-acid sequence, 139 residues long: Probable DNA-binding protein (139 aa).

A disordered region spans residues Asp97 to Thr139.

This Homo sapiens (Human) protein is Probable DNA-binding protein.